Consider the following 72-residue polypeptide: Large ribosomal subunit protein uL29 (72 aa).

This sequence belongs to the universal ribosomal protein uL29 family.

The polypeptide is Large ribosomal subunit protein uL29 (Caldicellulosiruptor saccharolyticus (strain ATCC 43494 / DSM 8903 / Tp8T 6331)).